The primary structure comprises 318 residues: Mevalonate 3-kinase (318 aa).

Leucine 19 contacts substrate. Residues 96–100 and 105–108 each bind ATP; these read YSSQN and SGSS. Positions 140 and 144 each coordinate substrate. Arginine 185 and serine 188 together coordinate ATP.

It belongs to the GHMP kinase family. Homodimer.

The catalysed reaction is (R)-mevalonate + ATP = (R)-3-phosphomevalonate + ADP + H(+). The protein operates within isoprenoid biosynthesis; isopentenyl diphosphate biosynthesis via mevalonate pathway. Its function is as follows. Catalyzes the phosphorylation of mevalonate (MVA) to yield mevalonate-3-phosphate. Functions in an alternative mevalonate pathway, only present in extreme acidophiles of the Thermoplasmatales order, which passes through mevalonate 3-phosphate rather than mevalonate 5-phosphate. The sequence is that of Mevalonate 3-kinase from Thermoplasma acidophilum (strain ATCC 25905 / DSM 1728 / JCM 9062 / NBRC 15155 / AMRC-C165).